The sequence spans 410 residues: Arginine deiminase (410 aa).

Cys400 (amidino-cysteine intermediate) is an active-site residue.

It belongs to the arginine deiminase family.

The protein localises to the cytoplasm. It carries out the reaction L-arginine + H2O = L-citrulline + NH4(+). Its pathway is amino-acid degradation; L-arginine degradation via ADI pathway; carbamoyl phosphate from L-arginine: step 1/2. The chain is Arginine deiminase from Bacillus cereus (strain G9842).